The primary structure comprises 571 residues: Phosphatidylinositol-3,5-bisphosphate 3-phosphatase MTMR2 (571 aa).

Positions 1 to 67 (MEEPPLLPGE…GVINRVEKIG (67 aa)) constitute a GRAM domain. The Myotubularin phosphatase domain occupies 133–508 (GWKVYDPIWE…RHLELWVGYY (376 aa)). Asparagine 258, asparagine 283, and isoleucine 284 together coordinate a 1,2-diacyl-sn-glycero-3-phospho-(1D-myo-inositol-3,5-bisphosphate). A 1,2-diacyl-sn-glycero-3-phospho-(1D-myo-inositol-3-phosphate) is bound by residues asparagine 258, asparagine 283, and isoleucine 284. Cysteine 345 acts as the Phosphocysteine intermediate in catalysis. A 1,2-diacyl-sn-glycero-3-phospho-(1D-myo-inositol-3,5-bisphosphate) is bound by residues serine 346, aspartate 347, glycine 348, tryptophan 349, aspartate 350, arginine 351, arginine 387, and arginine 391. Positions 346, 347, 348, 349, 350, and 351 each coordinate a 1,2-diacyl-sn-glycero-3-phospho-(1D-myo-inositol-3-phosphate). Arginine 391 lines the a 1,2-diacyl-sn-glycero-3-phospho-(1D-myo-inositol-3-phosphate) pocket. A coiled-coil region spans residues 521–553 (VHNRYKELLAKRAELQKKVEELQREITNRSTSS). Residues 544–571 (REITNRSTSSSERAGSPAQCVTPVQTVV) are disordered.

It belongs to the protein-tyrosine phosphatase family. Non-receptor class myotubularin subfamily. As to quaternary structure, homooligomer and heterooligomer.

The protein resides in the cytoplasm. The protein localises to the early endosome membrane. It carries out the reaction a 1,2-diacyl-sn-glycero-3-phospho-(1D-myo-inositol-3,5-bisphosphate) + H2O = a 1,2-diacyl-sn-glycero-3-phospho-(1D-myo-inositol-5-phosphate) + phosphate. The catalysed reaction is a 1,2-diacyl-sn-glycero-3-phospho-(1D-myo-inositol-3-phosphate) + H2O = a 1,2-diacyl-sn-glycero-3-phospho-(1D-myo-inositol) + phosphate. The enzyme catalyses 1,2-dioctanoyl-sn-glycero-3-phospho-(1-D-myo-inositol-3-phosphate) + H2O = 1,2-dioctanoyl-sn-glycero-3-phospho-(1D-myo-inositol) + phosphate. It catalyses the reaction 1,2-dioctanoyl-sn-glycero-3-phospho-(1D-myo-inositol-3,5-bisphosphate) + H2O = 1,2-dioctanoyl-sn-glycero-3-phospho-(1D-myo-inositol-5-phosphate) + phosphate. Lipid phosphatase that specifically dephosphorylates the D-3 position of phosphatidylinositol 3-phosphate and phosphatidylinositol 3,5-bisphosphate, generating phosphatidylinositol and phosphatidylinositol 5-phosphate. Regulates the level of these phosphoinositides critical for various biological processes including autophagy initiation and autophagosome maturation. In Gallus gallus (Chicken), this protein is Phosphatidylinositol-3,5-bisphosphate 3-phosphatase MTMR2.